Here is a 632-residue protein sequence, read N- to C-terminus: Golgin subfamily A member 8H (632 aa).

The interval 1–77 (MAEETQHNKL…SSATLKDLES (77 aa)) is disordered. 2 coiled-coil regions span residues 110-201 (VEHQ…LSSR) and 240-468 (ECAE…EKAD). Basic and acidic residues-rich tracts occupy residues 352–362 (KQEERIQEQHK) and 427–440 (HGGEHLDSEGEEAP). 3 disordered regions span residues 352–379 (KQEERIQEQHKSLQQLAKPQSVFEEPNN), 423–452 (PGEGHGGEHLDSEGEEAPRPMPSVPEDPES), and 496–524 (LSEPGGRAKDAALGGGHHQAGAQGGDEGE). The span at 508 to 520 (LGGGHHQAGAQGG) shows a compositional bias: gly residues.

This sequence belongs to the GOLGA8 family.

This chain is Golgin subfamily A member 8H (GOLGA8H), found in Homo sapiens (Human).